We begin with the raw amino-acid sequence, 410 residues long: D-amino acid dehydrogenase (410 aa).

9–14 (GGGIVG) is an FAD binding site.

Belongs to the DadA oxidoreductase family. Requires FAD as cofactor.

The protein resides in the cell inner membrane. It catalyses the reaction a D-alpha-amino acid + a quinone + H2O = a 2-oxocarboxylate + a quinol + NH4(+). With respect to regulation, activity is markedly inhibited by benzoate, and moderately by SH reagents such as p-hydroxymercuribenzoate, iodoacetamide, and iodoacetate. Catalyzes the oxidative deamination of D-amino acids. Has broad substrate specificity; is mostly active on D-proline, and to a lesser extent, on several other D-amino acids such as D-alanine, D-phenylalanine and D-serine. Mediates electron transport from D-proline to coenzyme Q1 in vitro, and is involved in the electron transport chain from D-proline to the c-type cytochrome in vivo. This Helicobacter pylori (Campylobacter pylori) protein is D-amino acid dehydrogenase.